We begin with the raw amino-acid sequence, 274 residues long: Beta-lactamase OXA-9 (274 aa).

A signal peptide spans 1-24; that stretch reads MKKILLLHMLVFVSATLPISSVAS. Ser-58 serves as the catalytic Acyl-ester intermediate. Lys-61 is subject to N6-carboxylysine. 206 to 208 contacts substrate; it reads KSG.

Belongs to the class-D beta-lactamase family.

The catalysed reaction is a beta-lactam + H2O = a substituted beta-amino acid. Functionally, oxacillin-hydrolyzing beta-lactamase. Confers resistance to beta-lactam antibiotics but at a significantly lower level than the TEM bla gene product. This chain is Beta-lactamase OXA-9 (bla), found in Klebsiella aerogenes (Enterobacter aerogenes).